Consider the following 254-residue polypeptide: Dolichol-phosphate mannosyltransferase subunit 1 (254 aa).

GDP-alpha-D-mannose-binding residues include proline 25, tyrosine 27, glutamate 29, valine 56, aspartate 58, aspartate 111, alanine 112, aspartate 113, arginine 140, and arginine 227. Aspartate 113 contributes to the Mg(2+) binding site. Aspartate 113 is a binding site for Mn(2+).

This sequence belongs to the glycosyltransferase 2 family. Component of the dolichol-phosphate mannose (DPM) synthase complex composed of dpm1, dpm2 and dpm3. Mg(2+) is required as a cofactor. The cofactor is Mn(2+). Requires Ca(2+) as cofactor.

It localises to the endoplasmic reticulum. It catalyses the reaction a di-trans,poly-cis-dolichyl phosphate + GDP-alpha-D-mannose = a di-trans,poly-cis-dolichyl beta-D-mannosyl phosphate + GDP. It functions in the pathway protein modification; protein glycosylation. Its function is as follows. Transfers mannose from GDP-mannose to dolichol monophosphate to form dolichol phosphate mannose (Dol-P-Man) which is the mannosyl donor in pathways leading to N-glycosylation, glycosyl phosphatidylinositol membrane anchoring, and O-mannosylation of proteins; catalytic subunit of the dolichol-phosphate mannose (DPM) synthase complex. In Dictyostelium discoideum (Social amoeba), this protein is Dolichol-phosphate mannosyltransferase subunit 1 (dpm1).